Reading from the N-terminus, the 214-residue chain is Ribonuclease HII (214 aa).

In terms of domain architecture, RNase H type-2 spans 26–214 (EIVCGVDEAG…PVRAALDLIR (189 aa)). The a divalent metal cation site is built by D32, E33, and D124.

This sequence belongs to the RNase HII family. Requires Mn(2+) as cofactor. The cofactor is Mg(2+).

It is found in the cytoplasm. It carries out the reaction Endonucleolytic cleavage to 5'-phosphomonoester.. Its function is as follows. Endonuclease that specifically degrades the RNA of RNA-DNA hybrids. The polypeptide is Ribonuclease HII (Burkholderia orbicola (strain MC0-3)).